Consider the following 178-residue polypeptide: Large ribosomal subunit protein uL6 (178 aa).

The protein belongs to the universal ribosomal protein uL6 family. Part of the 50S ribosomal subunit.

In terms of biological role, this protein binds to the 23S rRNA, and is important in its secondary structure. It is located near the subunit interface in the base of the L7/L12 stalk, and near the tRNA binding site of the peptidyltransferase center. The sequence is that of Large ribosomal subunit protein uL6 from Staphylococcus aureus (strain Mu3 / ATCC 700698).